We begin with the raw amino-acid sequence, 99 residues long: Large ribosomal subunit protein uL23 (99 aa).

It belongs to the universal ribosomal protein uL23 family. In terms of assembly, part of the 50S ribosomal subunit. Contacts protein L29, and trigger factor when it is bound to the ribosome.

Functionally, one of the early assembly proteins it binds 23S rRNA. One of the proteins that surrounds the polypeptide exit tunnel on the outside of the ribosome. Forms the main docking site for trigger factor binding to the ribosome. The sequence is that of Large ribosomal subunit protein uL23 from Ectopseudomonas mendocina (strain ymp) (Pseudomonas mendocina).